The chain runs to 157 residues: Transcription initiation factor IIA large subunit (157 aa).

The protein belongs to the TFIIA subunit 1 family. In terms of assembly, TFIIA is a heterodimer of the large subunit and the small subunit gamma.

It is found in the nucleus. Functionally, TFIIA is a component of the transcription machinery of RNA polymerase II and plays an important role in transcriptional activation. This is Transcription initiation factor IIA large subunit (TOA1) from Encephalitozoon cuniculi (strain GB-M1) (Microsporidian parasite).